A 214-amino-acid polypeptide reads, in one-letter code: Adenylate kinase (214 aa).

10–15 (GAGKGT) contacts ATP. Residues 30–59 (CTGDMLRAAVKAGSELGLKAKEIMDAGKLV) are NMP. AMP contacts are provided by residues Thr-31, Arg-36, 57–59 (KLV), 85–88 (GFPR), and Gln-92. An LID region spans residues 122-159 (GRRVHAASGRVYHIKFNPPKVEDKDDVTGEELTIRKDD). ATP contacts are provided by residues Arg-123 and 132-133 (VY). AMP contacts are provided by Arg-156 and Arg-167. An ATP-binding site is contributed by Arg-200.

Belongs to the adenylate kinase family. As to quaternary structure, monomer.

The protein resides in the cytoplasm. The catalysed reaction is AMP + ATP = 2 ADP. Its pathway is purine metabolism; AMP biosynthesis via salvage pathway; AMP from ADP: step 1/1. Its function is as follows. Catalyzes the reversible transfer of the terminal phosphate group between ATP and AMP. Plays an important role in cellular energy homeostasis and in adenine nucleotide metabolism. The polypeptide is Adenylate kinase (Yersinia enterocolitica).